The chain runs to 270 residues: dTDP-6-deoxy-L-talose 4-dehydrogenase (NAD(+)) (270 aa).

NAD(+)-binding positions include 11–12 (YI), 50–51 (DI), 72–76 (LAWQA), Asn-87, Thr-112, Tyr-135, and Lys-139. The substrate site is built by Thr-112 and Tyr-135. The active-site Proton acceptor is the Tyr-135.

This sequence belongs to the NAD(P)-dependent epimerase/dehydratase family.

It catalyses the reaction dTDP-6-deoxy-beta-L-talose + NAD(+) = dTDP-4-dehydro-beta-L-rhamnose + NADH + H(+). The protein operates within bacterial outer membrane biogenesis; LPS O-antigen biosynthesis. Its function is as follows. Catalyzes the reduction of dTDP-6-deoxy-L-lyxo-4-hexulose to dTDP-6-deoxy-L-talose. The chain is dTDP-6-deoxy-L-talose 4-dehydrogenase (NAD(+)) (tll) from Aggregatibacter actinomycetemcomitans (Actinobacillus actinomycetemcomitans).